The following is a 169-amino-acid chain: MSSRNNPARVAIVMGSKSDWATMQFAAEIFEILNVPHHVEVVSAHRTPDKLFSFAESAEENGYQVIIAGAGGAAHLPGMIAAKTLVPVLGVPVQSAALSGVDSLYSIVQMPRGIPVGTLAIGKAGAANAALLAAQILATHDKELHQRLNDWRKAQTDEVLENPDPRGAA.

Substrate-binding residues include S16, D19, and R46.

The protein belongs to the AIR carboxylase family. Class I subfamily.

It carries out the reaction 5-carboxyamino-1-(5-phospho-D-ribosyl)imidazole + H(+) = 5-amino-1-(5-phospho-D-ribosyl)imidazole-4-carboxylate. It participates in purine metabolism; IMP biosynthesis via de novo pathway; 5-amino-1-(5-phospho-D-ribosyl)imidazole-4-carboxylate from 5-amino-1-(5-phospho-D-ribosyl)imidazole (N5-CAIR route): step 2/2. Catalyzes the conversion of N5-carboxyaminoimidazole ribonucleotide (N5-CAIR) to 4-carboxy-5-aminoimidazole ribonucleotide (CAIR). The sequence is that of N5-carboxyaminoimidazole ribonucleotide mutase from Escherichia coli O157:H7.